Reading from the N-terminus, the 239-residue chain is Large ribosomal subunit protein uL2 (239 aa).

Disordered regions lie at residues methionine 1–serine 21 and proline 203–lysine 239. A compositionally biased stretch (basic residues) spans proline 222–lysine 239.

The protein belongs to the universal ribosomal protein uL2 family. In terms of assembly, part of the 50S ribosomal subunit. Forms a bridge to the 30S subunit in the 70S ribosome.

Functionally, one of the primary rRNA binding proteins. Required for association of the 30S and 50S subunits to form the 70S ribosome, for tRNA binding and peptide bond formation. It has been suggested to have peptidyltransferase activity; this is somewhat controversial. Makes several contacts with the 16S rRNA in the 70S ribosome. The chain is Large ribosomal subunit protein uL2 from Pyrococcus furiosus (strain ATCC 43587 / DSM 3638 / JCM 8422 / Vc1).